A 283-amino-acid chain; its full sequence is tRNA-cytidine(32) 2-sulfurtransferase (283 aa).

Residues 49-54 (SGGKDS) carry the PP-loop motif motif. Residues cysteine 124, cysteine 127, and cysteine 215 each coordinate [4Fe-4S] cluster.

This sequence belongs to the TtcA family. Homodimer. It depends on Mg(2+) as a cofactor. Requires [4Fe-4S] cluster as cofactor.

It localises to the cytoplasm. It catalyses the reaction cytidine(32) in tRNA + S-sulfanyl-L-cysteinyl-[cysteine desulfurase] + AH2 + ATP = 2-thiocytidine(32) in tRNA + L-cysteinyl-[cysteine desulfurase] + A + AMP + diphosphate + H(+). The protein operates within tRNA modification. In terms of biological role, catalyzes the ATP-dependent 2-thiolation of cytidine in position 32 of tRNA, to form 2-thiocytidine (s(2)C32). The sulfur atoms are provided by the cysteine/cysteine desulfurase (IscS) system. This is tRNA-cytidine(32) 2-sulfurtransferase from Acaryochloris marina (strain MBIC 11017).